Here is a 760-residue protein sequence, read N- to C-terminus: Armadillo-like helical domain-containing protein 4 (760 aa).

A signal peptide spans 1-27 (MSRPIVLHICLAFCSLLLLNFAAQCLA). The Extracellular portion of the chain corresponds to 28–700 (FPNLERREIV…KDKAGYMSGM (673 aa)). Disordered regions lie at residues 49–69 (LNTD…SGDP), 117–143 (GEEV…LTNP), 216–243 (RTEK…TEPS), 373–392 (HGGE…PMGD), 474–495 (TRGE…DAPR), and 536–652 (NEEL…SQEP). Asn-56 is a glycosylation site (N-linked (GlcNAc...) asparagine). The span at 216 to 228 (RTEKFEANPEHKT) shows a compositional bias: basic and acidic residues. Polar residues predominate over residues 380 to 390 (DQSSVTPTSPM). The span at 474–484 (TRGEDETKGGR) shows a compositional bias: basic and acidic residues. The span at 594 to 635 (LESEEGEDDEDEEDEEEEDEEEEDEEEDEEDKDADSLDEALG) shows a compositional bias: acidic residues. A helical transmembrane segment spans residues 701 to 721 (LVPVGVGIAGALFILGALYSI). The Cytoplasmic segment spans residues 722 to 760 (KVMNRRRRNGFKRHKRKQREFNSMQDRVMLLADSSEDEF). A phosphoserine mark is found at Ser-755 and Ser-756.

Interacts with IL6ST; this interaction prevents IL6ST protein homodimerization and bridges ARMH4 with IL6R and STAT3 and therefore inhibits phosphorylation of STAT3 at 'Tyr-705'. Interacts (via cytoplasmic tail) with RICTOR; this interaction bridges ARMH4 to the mTORC2 complex and inhibits the mTORC2 kinase activity.

Its subcellular location is the membrane. Functionally, may modulate immune response and may play a role in inflammation. Down-modulates STAT3 signaling throught direct interaction with IL6ST, resulting in the inhibition of phosphorylation of STAT3 at Tyr-705. May negatively regulates AKT signaling by modulating the activity of mTORC2 complex through RICTOR interaction. This Bos taurus (Bovine) protein is Armadillo-like helical domain-containing protein 4.